The following is a 190-amino-acid chain: Putative CRISPR system CMR subunit Cmr7 2 (190 aa).

This sequence belongs to the CRISPR system Cmr7 family. Homodimer.

Functionally, CRISPR (clustered regularly interspaced short palindromic repeat) is an adaptive immune system that provides protection against mobile genetic elements (viruses, transposable elements and conjugative plasmids). CRISPR clusters contain spacers, sequences complementary to antecedent mobile elements, and target invading nucleic acids. CRISPR clusters are transcribed and processed into CRISPR RNA (crRNA). This chain is Putative CRISPR system CMR subunit Cmr7 2 (cmr7b), found in Saccharolobus solfataricus (strain ATCC 35092 / DSM 1617 / JCM 11322 / P2) (Sulfolobus solfataricus).